A 330-amino-acid polypeptide reads, in one-letter code: ADP-L-glycero-D-manno-heptose-6-epimerase (330 aa).

NADP(+) contacts are provided by residues 11–12 (FI), 32–33 (DN), Lys-39, Lys-54, 75–79 (EGACS), and Asn-92. The Proton acceptor role is filled by Tyr-139. Lys-143 contributes to the NADP(+) binding site. Substrate is bound at residue Asn-168. NADP(+)-binding residues include Val-169 and Lys-177. Lys-177 (proton acceptor) is an active-site residue. Residues Arg-179, His-186, 200–203 (FGEY), Arg-213, and Tyr-292 each bind substrate.

The protein belongs to the NAD(P)-dependent epimerase/dehydratase family. HldD subfamily. As to quaternary structure, homopentamer. Requires NADP(+) as cofactor.

It carries out the reaction ADP-D-glycero-beta-D-manno-heptose = ADP-L-glycero-beta-D-manno-heptose. Its pathway is nucleotide-sugar biosynthesis; ADP-L-glycero-beta-D-manno-heptose biosynthesis; ADP-L-glycero-beta-D-manno-heptose from D-glycero-beta-D-manno-heptose 7-phosphate: step 4/4. Functionally, catalyzes the interconversion between ADP-D-glycero-beta-D-manno-heptose and ADP-L-glycero-beta-D-manno-heptose via an epimerization at carbon 6 of the heptose. The polypeptide is ADP-L-glycero-D-manno-heptose-6-epimerase (Burkholderia vietnamiensis (strain G4 / LMG 22486) (Burkholderia cepacia (strain R1808))).